Consider the following 359-residue polypeptide: Peptide chain release factor 1 (359 aa).

Glutamine 236 bears the N5-methylglutamine mark.

Belongs to the prokaryotic/mitochondrial release factor family. Post-translationally, methylated by PrmC. Methylation increases the termination efficiency of RF1.

The protein localises to the cytoplasm. In terms of biological role, peptide chain release factor 1 directs the termination of translation in response to the peptide chain termination codons UAG and UAA. The polypeptide is Peptide chain release factor 1 (Streptococcus agalactiae serotype Ia (strain ATCC 27591 / A909 / CDC SS700)).